Here is a 159-residue protein sequence, read N- to C-terminus: C-type lectin BJcuL (159 aa).

The N-terminal stretch at 1-24 (MGRFLFVASSACWFVFLSLSGAKG) is a signal peptide. 4 cysteine pairs are disulfide-bonded: Cys-27–Cys-38, Cys-55–Cys-155, Cys-62–Cys-157, and Cys-130–Cys-147. A C-type lectin domain is found at 34 to 156 (MNGLCYKIFN…CESKNAFLCQ (123 aa)). Ca(2+) contacts are provided by Gln-120, Asp-122, Glu-128, Asn-143, and Asp-144. A Galactose-binding motif is present at residues 120 to 122 (QPD).

It belongs to the true venom lectin family. As to quaternary structure, homodecamer of disulfide-linked dimers arranged in two 5-fold symmetric pentamers. Binds the gentamicin group of aminoglycoside antibiotics at the dimeric interface near the intermolecular disulfide bond. In terms of tissue distribution, expressed by the venom gland.

The protein localises to the secreted. Hemagglutination activity is inhibited by lactose (MIC=2.5 mM), galactose (MIC=10 mM), and raffinose. Is very weakly or not inhibited by gentamicin, kanamycin, glucose and sucrose. In terms of biological role, galactose-binding lectin which recognizes specific carbohydrate structures and agglutinates a variety of animal cells by binding to cell-surface glycoproteins and glycolipids. Calcium-dependent lectin. Also binds lactose and raffinose. Shows high hemagglutinating activity on mammalian erythrocytes. It also involved in immunological functions, since it is able of inducing potent neutrophil activation. In vivo, it causes edema and increases vascular permeability after injection into mouse hind paws (10-100 ug/paw). In anesthetized rats, it decreases the blood pressure by approximately 15%, with a rapid return to the resting level. Is an effective inhibitor of cell growth in some cancer cell lines, especially against renal and pancreatic cancer cell lines, human breast and ovarian carcinoma, glioblastoma and a bovine brain microvascular endothelial cell line. The polypeptide is C-type lectin BJcuL (Bothrops jararacussu (Jararacussu)).